A 335-amino-acid chain; its full sequence is MILGIESSCDDSSIALMDIDNFELKKYKKITQENEHSKFGGVVPELAARLHTAAIPNLIEDVKEFFTSIKAVAVTNEPGLSVSLISGVSAARALSLALGIPLIGVNHLIGHIYSLFLDKNVVLPLGVLLVSGGHTMVLNIDESGYIKLIATTSDDSFGESFDKVAKMMDLGYPGGAIIEKLALSGDKNRFNFTVPLKHDKRLEYSFSGLKNQVRTQISKFESLSLQDKSDIASSFQYTAISHITDKLEKIFSEYKFKNFGAIGGGSANQVLRSNLEQICEKFGSNLMFAPLKFCSDNAAMIARAGVCKYKNKCFTKPLDMSINPRCKLDGANLYF.

Fe cation-binding residues include His-107 and His-111. Substrate contacts are provided by residues Leu-129 to Gly-133, Asp-162, Gly-175, and Asn-268. Asp-296 contacts Fe cation.

It belongs to the KAE1 / TsaD family. Requires Fe(2+) as cofactor.

It is found in the cytoplasm. The enzyme catalyses L-threonylcarbamoyladenylate + adenosine(37) in tRNA = N(6)-L-threonylcarbamoyladenosine(37) in tRNA + AMP + H(+). Its function is as follows. Required for the formation of a threonylcarbamoyl group on adenosine at position 37 (t(6)A37) in tRNAs that read codons beginning with adenine. Is involved in the transfer of the threonylcarbamoyl moiety of threonylcarbamoyl-AMP (TC-AMP) to the N6 group of A37, together with TsaE and TsaB. TsaD likely plays a direct catalytic role in this reaction. In Campylobacter fetus subsp. fetus (strain 82-40), this protein is tRNA N6-adenosine threonylcarbamoyltransferase.